The chain runs to 498 residues: ATP synthase subunit beta, chloroplastic (498 aa).

172-179 (GGAGVGKT) contributes to the ATP binding site.

It belongs to the ATPase alpha/beta chains family. As to quaternary structure, F-type ATPases have 2 components, CF(1) - the catalytic core - and CF(0) - the membrane proton channel. CF(1) has five subunits: alpha(3), beta(3), gamma(1), delta(1), epsilon(1). CF(0) has four main subunits: a(1), b(1), b'(1) and c(9-12).

It localises to the plastid. Its subcellular location is the chloroplast thylakoid membrane. It carries out the reaction ATP + H2O + 4 H(+)(in) = ADP + phosphate + 5 H(+)(out). Functionally, produces ATP from ADP in the presence of a proton gradient across the membrane. The catalytic sites are hosted primarily by the beta subunits. This chain is ATP synthase subunit beta, chloroplastic, found in Nymphaea odorata (White water lily).